Reading from the N-terminus, the 341-residue chain is S-adenosylmethionine:tRNA ribosyltransferase-isomerase (341 aa).

Belongs to the QueA family. In terms of assembly, monomer.

It is found in the cytoplasm. The catalysed reaction is 7-aminomethyl-7-carbaguanosine(34) in tRNA + S-adenosyl-L-methionine = epoxyqueuosine(34) in tRNA + adenine + L-methionine + 2 H(+). It functions in the pathway tRNA modification; tRNA-queuosine biosynthesis. Its function is as follows. Transfers and isomerizes the ribose moiety from AdoMet to the 7-aminomethyl group of 7-deazaguanine (preQ1-tRNA) to give epoxyqueuosine (oQ-tRNA). This chain is S-adenosylmethionine:tRNA ribosyltransferase-isomerase, found in Chlorobium phaeovibrioides (strain DSM 265 / 1930) (Prosthecochloris vibrioformis (strain DSM 265)).